The sequence spans 279 residues: Thymidylate synthase (279 aa).

133–134 (RR) contacts dUMP. Cys154 serves as the catalytic Nucleophile. DUMP is bound by residues 178-181 (RSND), Asn189, and 219-221 (HIY). Asp181 lines the (6R)-5,10-methylene-5,6,7,8-tetrahydrofolate pocket. Ala278 contacts (6R)-5,10-methylene-5,6,7,8-tetrahydrofolate.

Belongs to the thymidylate synthase family. Bacterial-type ThyA subfamily. As to quaternary structure, homodimer.

It localises to the cytoplasm. It catalyses the reaction dUMP + (6R)-5,10-methylene-5,6,7,8-tetrahydrofolate = 7,8-dihydrofolate + dTMP. Its pathway is pyrimidine metabolism; dTTP biosynthesis. Functionally, catalyzes the reductive methylation of 2'-deoxyuridine-5'-monophosphate (dUMP) to 2'-deoxythymidine-5'-monophosphate (dTMP) while utilizing 5,10-methylenetetrahydrofolate (mTHF) as the methyl donor and reductant in the reaction, yielding dihydrofolate (DHF) as a by-product. This enzymatic reaction provides an intracellular de novo source of dTMP, an essential precursor for DNA biosynthesis. This Streptococcus agalactiae serotype Ia (strain ATCC 27591 / A909 / CDC SS700) protein is Thymidylate synthase.